The sequence spans 532 residues: Membrane protein insertase YidC (532 aa).

The next 5 membrane-spanning stretches (helical) occupy residues 7–27, 336–356, 413–433, 450–470, and 492–512; these read FFIF…QSQM, LTIL…ITFI, GGFL…YMLI, LSSQ…MFFI, and PVIF…YYII.

It belongs to the OXA1/ALB3/YidC family. Type 1 subfamily. As to quaternary structure, interacts with the Sec translocase complex via SecD. Specifically interacts with transmembrane segments of nascent integral membrane proteins during membrane integration.

Its subcellular location is the cell membrane. Functionally, required for the insertion and/or proper folding and/or complex formation of integral membrane proteins into the membrane. Involved in integration of membrane proteins that insert both dependently and independently of the Sec translocase complex, as well as at least some lipoproteins. Aids folding of multispanning membrane proteins. This chain is Membrane protein insertase YidC, found in Buchnera aphidicola subsp. Acyrthosiphon pisum (strain 5A).